The chain runs to 153 residues: MTVTDIGLVIMIVIALLFAVFDEFIVDYALRGKTRLRVPLRRQGRLDGLIFIVLLLILLYKNITTDGKVMTSTLILFLGLMVIYLAYIRCPRMLFKTEGFFYGNVFINYSRIKNMNLSEDGYLVIDLEKRSLLIQVNKLDDLQKIYHLLIEIQ.

Transmembrane regions (helical) follow at residues 6–26 (IGLV…EFIV), 46–66 (LDGL…ITTD), and 68–88 (KVMT…LAYI).

This sequence belongs to the UPF0266 family.

It is found in the cell inner membrane. The protein is UPF0266 membrane protein SG1324 of Sodalis glossinidius (strain morsitans).